Consider the following 210-residue polypeptide: Large ribosomal subunit protein uL3 (210 aa).

The segment covering 131–140 (NRASHGNSLS) has biased composition (polar residues). Residues 131 to 150 (NRASHGNSLSHRAPGSIGCR) form a disordered region. Position 151 is an N5-methylglutamine (Gln151).

The protein belongs to the universal ribosomal protein uL3 family. In terms of assembly, part of the 50S ribosomal subunit. Forms a cluster with proteins L14 and L19. Methylated by PrmB.

In terms of biological role, one of the primary rRNA binding proteins, it binds directly near the 3'-end of the 23S rRNA, where it nucleates assembly of the 50S subunit. This chain is Large ribosomal subunit protein uL3, found in Acidithiobacillus ferrooxidans (strain ATCC 23270 / DSM 14882 / CIP 104768 / NCIMB 8455) (Ferrobacillus ferrooxidans (strain ATCC 23270)).